The sequence spans 198 residues: MQRVTSYLPAGTPSSHPIAQVKLPHDLRHLRRKLLHLENGEMVMLDLKDPVLFANGDLLVRDDGELIEILAADEKLFEIRGRDRTHLVELAWHLGNRHLAAQIEEDRIVILRDHVIRAMLQGLGAVVLEIDEPFQPARGAYHSPGGHSHGHDHDHNHDHGHDHAHDHNHGHDHDHEHGYEHEHEHRHDRGHDHDHKHD.

A disordered region spans residues 137-198; the sequence is ARGAYHSPGG…RGHDHDHKHD (62 aa). Over residues 149–198 the composition is skewed to basic and acidic residues; sequence HGHDHDHNHDHGHDHAHDHNHGHDHDHEHGYEHEHEHRHDRGHDHDHKHD.

This sequence belongs to the UreE family.

The protein resides in the cytoplasm. In terms of biological role, involved in urease metallocenter assembly. Binds nickel. Probably functions as a nickel donor during metallocenter assembly. The sequence is that of Urease accessory protein UreE from Rhizobium johnstonii (strain DSM 114642 / LMG 32736 / 3841) (Rhizobium leguminosarum bv. viciae).